A 101-amino-acid polypeptide reads, in one-letter code: Urease subunit beta (101 aa).

It belongs to the urease beta subunit family. In terms of assembly, heterotrimer of UreA (gamma), UreB (beta) and UreC (alpha) subunits. Three heterotrimers associate to form the active enzyme.

The protein resides in the cytoplasm. It catalyses the reaction urea + 2 H2O + H(+) = hydrogencarbonate + 2 NH4(+). It functions in the pathway nitrogen metabolism; urea degradation; CO(2) and NH(3) from urea (urease route): step 1/1. The polypeptide is Urease subunit beta (Bradyrhizobium sp. (strain BTAi1 / ATCC BAA-1182)).